Reading from the N-terminus, the 144-residue chain is Large ribosomal subunit protein uL22 (144 aa).

The disordered stretch occupies residues 1–38 (MAETQTTKKGAKRVRQPVPARRSKPNRPAKAAPGPHAS). Residues 9–27 (KGAKRVRQPVPARRSKPNR) are compositionally biased toward basic residues.

This sequence belongs to the universal ribosomal protein uL22 family. Part of the 50S ribosomal subunit.

Its function is as follows. This protein binds specifically to 23S rRNA; its binding is stimulated by other ribosomal proteins, e.g. L4, L17, and L20. It is important during the early stages of 50S assembly. It makes multiple contacts with different domains of the 23S rRNA in the assembled 50S subunit and ribosome. In terms of biological role, the globular domain of the protein is located near the polypeptide exit tunnel on the outside of the subunit, while an extended beta-hairpin is found that lines the wall of the exit tunnel in the center of the 70S ribosome. This Anaeromyxobacter sp. (strain Fw109-5) protein is Large ribosomal subunit protein uL22.